The sequence spans 906 residues: MTLDEEYLDITFLTENGFVRKRCPKCGKHFWTADPEREICGDPPCESYSFIGNPVFKKPFELDEMREYYLNFFERRGHGRIERYPVVARWRTDIYLTIASIADFQPFVTSGVAPPPANPLTISQPCIRLDDLDSVGRTGRHLTLFEMMAHHAFNYPGKEIYWKNETVAYCTELLNELGVKKEDIVYKEEPWAGGGNAGPCLEAIVGGLEVATLVFMNLEEHPEGDIEIKGARYRKMDNYIVDTGYGLERFVWASKGTPTVYDAIFPEVVDTIIDNSNVSFNREDERVRRIVAESSKLAGIMGELRGERLNQLRKSVADTVGVSVEELEGIVVPLEKVYSLADHTRCILFMLGDGLVPSNAGAGYLARLMIRRSLRLAEELELGLDLYDLVEMHKKILGFEFDVPLSTVQEILELEKERYRTTVSKGTRLVERLVERKKKLEKDDLIELYDSHGIPVELAVGIAAEKGAEVEMPKDIYAELAKRHSKAEKVQEKKITLQNEYPATEKLYYDDPTLLEFEAEVIGVEGDFVILNRSAFYPESGGQDNDVGYLIANGGKFEVVDVLEADGVVLHVVKGAKPEVGTKVKGVIDSDVRWRHMRHHSATHVLLYSLQKVLGNHVWQAGARKEFSKARLDVTHFRRPSEEEIKEIEMLANREILANKPIKWEWMDRIEAERKFGFRLYQGGVPPGRKIRVVQVGDDVQACGGTHCRSTGEIGMLKILKVESIQDGVIRFEFAAGEAAIEAVEEMERLLREASSILRVEPAKLPKTVERFFEEWKDQRKEIERLKSVIADLWADILMERAEEFDSMKVVAEVVDADMQALQKLAERLAEKGAVGCLMAKGEGKVFVVTFSGQKYDARELLREIGRVAKGSGGGRKDVAQGAVQQLLDREEMLDVIFRFLSEHEG.

Residues H600, H604, C703, and H707 each contribute to the Zn(2+) site.

The protein belongs to the class-II aminoacyl-tRNA synthetase family. In terms of assembly, homodimer. Requires Zn(2+) as cofactor.

It localises to the cytoplasm. It catalyses the reaction tRNA(Ala) + L-alanine + ATP = L-alanyl-tRNA(Ala) + AMP + diphosphate. In terms of biological role, catalyzes the attachment of alanine to tRNA(Ala) in a two-step reaction: alanine is first activated by ATP to form Ala-AMP and then transferred to the acceptor end of tRNA(Ala). Incorrectly charged aminoacyl-tRNA(Ala) is also edited in situ by the editing domain. This Archaeoglobus fulgidus (strain ATCC 49558 / DSM 4304 / JCM 9628 / NBRC 100126 / VC-16) protein is Alanine--tRNA ligase (alaS).